Consider the following 1040-residue polypeptide: Multidrug resistance protein MdtB (1040 aa).

12 helical membrane-spanning segments follow: residues 16-36 (FIMR…AGII), 347-367 (LMMA…NIPA), 369-389 (IIPG…MVFL), 396-416 (LTLM…IVVI), 440-460 (IGFT…PLLF), 472-492 (FAIT…TLTP), 537-557 (WLTL…WVFI), 863-883 (LGST…VLGI), 888-908 (FIHP…ALLA), 911-931 (IAGS…IGIV), 968-988 (ILMT…STGV), and 998-1018 (IGMV…TPVI).

This sequence belongs to the resistance-nodulation-cell division (RND) (TC 2.A.6) family. MdtB subfamily. As to quaternary structure, part of a tripartite efflux system composed of MdtA, MdtB and MdtC. MdtB forms a heteromultimer with MdtC.

It is found in the cell inner membrane. Functionally, the MdtABC tripartite complex confers resistance against novobiocin and deoxycholate. The polypeptide is Multidrug resistance protein MdtB (Escherichia coli O17:K52:H18 (strain UMN026 / ExPEC)).